The primary structure comprises 1756 residues: Protein TIC 214 (1756 aa).

Transmembrane regions (helical) follow at residues 18-38, 54-74, 79-99, 128-148, 163-183, and 210-230; these read VSGPIIIFGLYYGFLATLPFG, GYGIIAISGSITGQLIGFLSM, IYAALWKPYAITLLVVPYMFF, LFMDGLILQLLNPILLANPVL, ISFMISGLCGWLGGHILLTIF, and FSLLILCYCSFYLGRAPLPFL. Positions 1469-1504 are disordered; sequence KNKQVEDGQDKNGQVEDQDGQDQDGQVEDQQTDGKK. The segment covering 1471–1482 has biased composition (basic and acidic residues); that stretch reads KQVEDGQDKNGQ. Acidic residues predominate over residues 1484 to 1499; that stretch reads EDQDGQDQDGQVEDQQ.

This sequence belongs to the TIC214 family. Part of the Tic complex.

The protein localises to the plastid. It is found in the chloroplast inner membrane. Its function is as follows. Involved in protein precursor import into chloroplasts. May be part of an intermediate translocation complex acting as a protein-conducting channel at the inner envelope. This chain is Protein TIC 214, found in Pinus thunbergii (Japanese black pine).